The sequence spans 123 residues: Large ribosomal subunit protein uL14 (123 aa).

It belongs to the universal ribosomal protein uL14 family. Part of the 50S ribosomal subunit. Forms a cluster with proteins L3 and L19. In the 70S ribosome, L14 and L19 interact and together make contacts with the 16S rRNA in bridges B5 and B8.

Functionally, binds to 23S rRNA. Forms part of two intersubunit bridges in the 70S ribosome. The sequence is that of Large ribosomal subunit protein uL14 from Vibrio vulnificus (strain CMCP6).